The following is a 421-amino-acid chain: UDP-N-acetylglucosamine 1-carboxyvinyltransferase (421 aa).

24-25 is a binding site for phosphoenolpyruvate; sequence KN. Residue R93 coordinates UDP-N-acetyl-alpha-D-glucosamine. Catalysis depends on C117, which acts as the Proton donor. The residue at position 117 (C117) is a 2-(S-cysteinyl)pyruvic acid O-phosphothioketal. Positions 307 and 329 each coordinate UDP-N-acetyl-alpha-D-glucosamine.

This sequence belongs to the EPSP synthase family. MurA subfamily.

It localises to the cytoplasm. The catalysed reaction is phosphoenolpyruvate + UDP-N-acetyl-alpha-D-glucosamine = UDP-N-acetyl-3-O-(1-carboxyvinyl)-alpha-D-glucosamine + phosphate. Its pathway is cell wall biogenesis; peptidoglycan biosynthesis. Cell wall formation. Adds enolpyruvyl to UDP-N-acetylglucosamine. This Blochmanniella pennsylvanica (strain BPEN) protein is UDP-N-acetylglucosamine 1-carboxyvinyltransferase.